The primary structure comprises 428 residues: Enolase 1 (428 aa).

The tract at residues 38 to 58 is disordered; the sequence is EVPSGASTGENEAVELRDGGS. Position 163 (Gln163) interacts with (2R)-2-phosphoglycerate. The active-site Proton donor is the Glu205. Residues Asp242, Glu286, and Asp313 each contribute to the Mg(2+) site. The (2R)-2-phosphoglycerate site is built by Lys338, Arg367, Ser368, and Lys389. Lys338 serves as the catalytic Proton acceptor.

It belongs to the enolase family. Mg(2+) is required as a cofactor.

The protein resides in the cytoplasm. It localises to the secreted. The protein localises to the cell surface. It catalyses the reaction (2R)-2-phosphoglycerate = phosphoenolpyruvate + H2O. The protein operates within carbohydrate degradation; glycolysis; pyruvate from D-glyceraldehyde 3-phosphate: step 4/5. Functionally, catalyzes the reversible conversion of 2-phosphoglycerate (2-PG) into phosphoenolpyruvate (PEP). It is essential for the degradation of carbohydrates via glycolysis. In Lactobacillus gasseri (strain ATCC 33323 / DSM 20243 / BCRC 14619 / CIP 102991 / JCM 1131 / KCTC 3163 / NCIMB 11718 / NCTC 13722 / AM63), this protein is Enolase 1.